We begin with the raw amino-acid sequence, 227 residues long: (S)-2-haloacid dehalogenase 1 (227 aa).

Catalysis depends on Asp-10, which acts as the Nucleophile. Residues 11–12 (AY), Arg-41, and 118–119 (SN) contribute to the an (S)-2-haloacid site. The important for catalytic activity stretch occupies residues 175 to 180 (SSNAWD).

The protein belongs to the HAD-like hydrolase superfamily. S-2-haloalkanoic acid dehalogenase family.

The enzyme catalyses an (S)-2-haloacid + H2O = a (2R)-2-hydroxycarboxylate + a halide anion + H(+). It carries out the reaction (S)-2-chloropropanoate + H2O = (R)-lactate + chloride + H(+). Functionally, catalyzes the hydrolytic dehalogenation of small (S)-2-haloalkanoic acids to yield the corresponding (R)-2-hydroxyalkanoic acids. Acts on acids of short chain lengths, C(2) to C(4), with inversion of configuration at C-2. Active with 2-halogenated carboxylic acids and converts only the S-isomer (or L-isomer) of 2-chloropropionic acid with inversion of configuration to produce R-lactate (or D-isomer). This Pseudomonas sp. (strain CBS-3) protein is (S)-2-haloacid dehalogenase 1.